The following is a 401-amino-acid chain: Argininosuccinate synthase (401 aa).

9-17 contacts ATP; sequence AYSGGLDTS. Tyr-86 provides a ligand contact to L-citrulline. Gly-116 provides a ligand contact to ATP. L-aspartate-binding residues include Thr-118, Asn-122, and Asp-123. Residue Asn-122 participates in L-citrulline binding. Arg-126, Ser-174, Ser-183, Glu-259, and Tyr-271 together coordinate L-citrulline.

Belongs to the argininosuccinate synthase family. Type 1 subfamily. In terms of assembly, homotetramer.

The protein resides in the cytoplasm. The enzyme catalyses L-citrulline + L-aspartate + ATP = 2-(N(omega)-L-arginino)succinate + AMP + diphosphate + H(+). Its pathway is amino-acid biosynthesis; L-arginine biosynthesis; L-arginine from L-ornithine and carbamoyl phosphate: step 2/3. The sequence is that of Argininosuccinate synthase from Bacillus cereus (strain B4264).